Here is a 188-residue protein sequence, read N- to C-terminus: MIVIMDNGGQYVHRIWRTLRYLGVEAKIIPNTTPLEEIKAMKPKGIIFSGGPDINKTGNCSAILEHYDEFNVPILGICLGHQLIAKHFGGKVGRGEKAEYSLVEIEILDENDIFRGLPRKLRVWESHMDEVKELPPGFKLLARSETCPVEAMKHESLPIYGVQFHPEVAHTEHGADIYRNFAELCGEL.

In terms of domain architecture, Glutamine amidotransferase type-1 spans 1–188 (MIVIMDNGGQ…RNFAELCGEL (188 aa)). The Nucleophile role is filled by cysteine 78. Catalysis depends on residues histidine 165 and glutamate 167.

As to quaternary structure, heterodimer composed of a glutamine amidotransferase subunit (A) and a GMP-binding subunit (B).

The enzyme catalyses XMP + L-glutamine + ATP + H2O = GMP + L-glutamate + AMP + diphosphate + 2 H(+). The protein operates within purine metabolism; GMP biosynthesis; GMP from XMP (L-Gln route): step 1/1. Functionally, catalyzes the synthesis of GMP from XMP. The chain is GMP synthase [glutamine-hydrolyzing] subunit A from Thermococcus kodakarensis (strain ATCC BAA-918 / JCM 12380 / KOD1) (Pyrococcus kodakaraensis (strain KOD1)).